Here is a 459-residue protein sequence, read N- to C-terminus: Transcriptional coactivator YAP1-A (459 aa).

Over residues 1 to 13 (MEPGSQQQPSAPA) the composition is skewed to low complexity. Residues 1–22 (MEPGSQQQPSAPAQQPPPVGHQ) are disordered. S30, S80, S98, and S134 each carry phosphoserine; by LATS1 and LATS2. 2 disordered regions span residues 65-99 (FKQP…AHSS) and 126-145 (SAPH…PLPP). 2 consecutive WW domains span residues 141–174 (VPLP…DPRK) and 199–232 (GPLP…DPRL). The interval 246 to 268 (NAPVKAPPALPPPSPQTGVLGSG) is disordered. Residues 250 to 260 (KAPPALPPPSP) show a composition bias toward pro residues. The interval 261–459 (QTGVLGSGGN…LDKESFLTWL (199 aa)) is transactivation domain. Residues 269–297 (GNQQMRLQQLQMEKERLRLKHQELLRQVR) are a coiled coil. A disordered region spans residues 344–363 (GTYHSRDESTESGLSMSSYS). Residues 354 to 363 (ESGLSMSSYS) are compositionally biased toward polar residues.

Belongs to the YAP1 family. In terms of assembly, interacts with tead1. Post-translationally, phosphorylated by lats1 and lats2; leading to cytoplasmic translocation and inactivation.

The protein localises to the cytoplasm. It localises to the nucleus. Its subcellular location is the cell junction. The protein resides in the tight junction. It is found in the cell membrane. Its function is as follows. Transcriptional regulator which can act both as a coactivator and a corepressor and is the critical downstream regulatory target in the Hippo signaling pathway that plays a pivotal role in organ size control and tumor suppression by restricting proliferation and promoting apoptosis. Plays a key role in tissue tension and 3D tissue shape by regulating cortical actomyosin network formation. Required for expansion of the neural plate and neural plate border zone progenitor pools. Acts as a direct regulator of pax3 expression via interaction with tead1. This Xenopus laevis (African clawed frog) protein is Transcriptional coactivator YAP1-A.